The chain runs to 149 residues: UPF0178 protein VF_0601 (149 aa).

Belongs to the UPF0178 family.

The sequence is that of UPF0178 protein VF_0601 from Aliivibrio fischeri (strain ATCC 700601 / ES114) (Vibrio fischeri).